The chain runs to 448 residues: Glutamyl-tRNA reductase (448 aa).

Substrate-binding positions include 49 to 52 (TCNR), S109, 114 to 116 (ETQ), and Q120. The active-site Nucleophile is the C50. An NADP(+)-binding site is contributed by 189–194 (GAGETG). The disordered stretch occupies residues 427–448 (PVDEVEETDATSAKAPLRALMR).

Belongs to the glutamyl-tRNA reductase family. In terms of assembly, homodimer.

It carries out the reaction (S)-4-amino-5-oxopentanoate + tRNA(Glu) + NADP(+) = L-glutamyl-tRNA(Glu) + NADPH + H(+). It functions in the pathway porphyrin-containing compound metabolism; protoporphyrin-IX biosynthesis; 5-aminolevulinate from L-glutamyl-tRNA(Glu): step 1/2. Catalyzes the NADPH-dependent reduction of glutamyl-tRNA(Glu) to glutamate 1-semialdehyde (GSA). This Exiguobacterium sp. (strain ATCC BAA-1283 / AT1b) protein is Glutamyl-tRNA reductase.